We begin with the raw amino-acid sequence, 258 residues long: MLAKRIIPCLDVKDGQVVKGVQFRNHEIIGDIVPLAQRYAQEGADELVFYDITASSDGRVVDKSWVSRVAEVIDIPFCVAGGIKSPEDASQILSFGADKISINSPALADPTLISRLADRFGVQCIVVGIDTWFEAETGKYHVNQYTGDESRTRVTEWETLDWVKEVQKRGAGEIVLNMMNQDGVRNGYDLEQLRLVREVCKVPLIASGGAGTMEHFLEAFRDVDVDGALAASVFHKQIINIGDLKRFLSEQGVEIRLC.

Active-site residues include aspartate 11 and aspartate 130.

Belongs to the HisA/HisF family. In terms of assembly, heterodimer of HisH and HisF.

Its subcellular location is the cytoplasm. The catalysed reaction is 5-[(5-phospho-1-deoxy-D-ribulos-1-ylimino)methylamino]-1-(5-phospho-beta-D-ribosyl)imidazole-4-carboxamide + L-glutamine = D-erythro-1-(imidazol-4-yl)glycerol 3-phosphate + 5-amino-1-(5-phospho-beta-D-ribosyl)imidazole-4-carboxamide + L-glutamate + H(+). It participates in amino-acid biosynthesis; L-histidine biosynthesis; L-histidine from 5-phospho-alpha-D-ribose 1-diphosphate: step 5/9. Functionally, IGPS catalyzes the conversion of PRFAR and glutamine to IGP, AICAR and glutamate. The HisF subunit catalyzes the cyclization activity that produces IGP and AICAR from PRFAR using the ammonia provided by the HisH subunit. The chain is Imidazole glycerol phosphate synthase subunit HisF from Serratia proteamaculans (strain 568).